Consider the following 248-residue polypeptide: Pyridoxine 5'-phosphate synthase (248 aa).

N12 provides a ligand contact to 3-amino-2-oxopropyl phosphate. 14-15 (DH) lines the 1-deoxy-D-xylulose 5-phosphate pocket. Position 23 (R23) interacts with 3-amino-2-oxopropyl phosphate. H48 (proton acceptor) is an active-site residue. The 1-deoxy-D-xylulose 5-phosphate site is built by R50 and H55. Catalysis depends on E75, which acts as the Proton acceptor. T105 is a 1-deoxy-D-xylulose 5-phosphate binding site. H196 serves as the catalytic Proton donor. Residues G197 and 218–219 (GH) each bind 3-amino-2-oxopropyl phosphate.

Belongs to the PNP synthase family. In terms of assembly, homooctamer; tetramer of dimers.

Its subcellular location is the cytoplasm. The enzyme catalyses 3-amino-2-oxopropyl phosphate + 1-deoxy-D-xylulose 5-phosphate = pyridoxine 5'-phosphate + phosphate + 2 H2O + H(+). Its pathway is cofactor biosynthesis; pyridoxine 5'-phosphate biosynthesis; pyridoxine 5'-phosphate from D-erythrose 4-phosphate: step 5/5. In terms of biological role, catalyzes the complicated ring closure reaction between the two acyclic compounds 1-deoxy-D-xylulose-5-phosphate (DXP) and 3-amino-2-oxopropyl phosphate (1-amino-acetone-3-phosphate or AAP) to form pyridoxine 5'-phosphate (PNP) and inorganic phosphate. The chain is Pyridoxine 5'-phosphate synthase from Pseudomonas paraeruginosa (strain DSM 24068 / PA7) (Pseudomonas aeruginosa (strain PA7)).